The following is a 1198-amino-acid chain: Rac guanine nucleotide exchange factor B (1198 aa).

A disordered region spans residues 1–104 (MFSNFFGSSK…QHQGVITSLQ (104 aa)). Positions 8-20 (SSKRNTIASSSSS) are enriched in low complexity. The segment covering 21–34 (SKKDKDNGKDESSK) has biased composition (basic and acidic residues). Positions 35–58 (LKNSGSSTLPKPITNNESGNNFIT) are enriched in polar residues. Low complexity predominate over residues 59 to 97 (SPSVSSPLISPLSSSPSPLLSSSSNSIQSTSHQQQQQHQ). In terms of domain architecture, Calponin-homology (CH) 1 spans 126 to 232 (SSLEQTARKW…NIVVLGKHAS (107 aa)). A disordered region spans residues 260-284 (FGGNHNNNNNNNNNNNTSNGDLSPV). The span at 263-275 (NHNNNNNNNNNNN) shows a compositional bias: low complexity. Calponin-homology (CH) domains are found at residues 341–449 (PELQ…NKMY) and 511–619 (PEDM…ENFD). Residues 632-846 (RRQKVIEEII…KRVADHVNES (215 aa)) enclose the DH domain. Residues 876 to 1026 (TYIREGFLEI…WMEDLRSCLQ (151 aa)) enclose the PH domain. Acidic residues predominate over residues 940 to 952 (GEACVDGDDDGGE). Disordered stretches follow at residues 940–989 (GEAC…SNKS) and 1076–1198 (NNNN…IDNQ). Composition is skewed to low complexity over residues 977-989 (NSNN…SNKS) and 1076-1118 (NNNN…NNND). Over residues 1155-1167 (DETISDTESDDYE) the composition is skewed to acidic residues. The span at 1188-1198 (FSDTIKNIDNQ) shows a compositional bias: polar residues.

In terms of assembly, binds to F-actin.

Its subcellular location is the late endosome. Involved in the regulation of the late steps of the endocytic pathway. This Dictyostelium discoideum (Social amoeba) protein is Rac guanine nucleotide exchange factor B (gxcB).